The chain runs to 398 residues: uncharacterized protein (398 aa).

This is an uncharacterized protein from Ostreid herpesvirus 1 (isolate France) (OsHV-1).